A 176-amino-acid polypeptide reads, in one-letter code: Membrane glycoprotein UL144 (176 aa).

The signal sequence occupies residues 1-20 (MKPLIMLICFAVILLQLGVT). TNFR-Cys repeat units follow at residues 22–56 (VCQHNEVQLGNECCPPCGSGQRVTKVCTDYTSVTC) and 58–95 (PCPNGTYVSGLYNCTDCTQCNVTQVMIRNCTSTNNTVC). Cystine bridges form between Cys23–Cys34, Cys35–Cys48, Cys38–Cys56, Cys59–Cys71, Cys74–Cys87, and Cys77–Cys95. A helical membrane pass occupies residues 134–154 (LAWLSLFIFLVGIILLILYLI).

As to quaternary structure, interacts with host TRIM23; this interaction causes auto-ubiquitination of TRAF6, leading to NF-kappaB activation.

Its subcellular location is the membrane. Functionally, activates NF-kappaB in a tumor necrosis factor receptor (TNFR)-associated factor 6 (TRAF6)-dependent manner, causing the up-regulation of the chemokine CCL22. This Homo sapiens (Human) protein is Membrane glycoprotein UL144 (UL144).